The sequence spans 363 residues: Peroxisomal (S)-2-hydroxyacid oxidase GLO4 (363 aa).

The region spanning 1–357 (MDQIVNVDEF…TRNHVRTENE (357 aa)) is the FMN hydroxy acid dehydrogenase domain. Residues 78–80 (PTA), serine 107, 128–130 (QIY), and threonine 156 contribute to the FMN site. Residue tyrosine 130 participates in a 2-oxocarboxylate binding. An a 2-oxocarboxylate-binding site is contributed by arginine 165. FMN contacts are provided by lysine 228 and serine 250. Histidine 252 (proton acceptor) is an active-site residue. Arginine 255 lines the a 2-oxocarboxylate pocket. Residues 283-287 (DGGVR) and 306-307 (GR) each bind FMN. Residues 361-363 (SML) carry the Microbody targeting signal motif.

It belongs to the FMN-dependent alpha-hydroxy acid dehydrogenase family. As to quaternary structure, homotetramer. FMN is required as a cofactor.

It localises to the peroxisome. The enzyme catalyses a (2S)-2-hydroxycarboxylate + O2 = a 2-oxocarboxylate + H2O2. It catalyses the reaction 2-hydroxydodecanoate + O2 = 2-oxododecanoate + H2O2. The catalysed reaction is 2-hydroxyhexanoate + O2 = 2-oxohexanoate + H2O2. It carries out the reaction 2-hydroxyoctanoate + O2 = 2-oxooctanoate + H2O2. The enzyme catalyses (S)-lactate + O2 = pyruvate + H2O2. It functions in the pathway lipid metabolism; fatty acid metabolism. Oxidase that catalyzes the oxidation of a broad range of 2-hydroxyacids to the corresponding 2-oxoacids, with a reduction of O2 to H2O2. Displays the highest activity with the long-chain fatty acid 2-hydroxydodecanoate and has intermediate activity with 2-hydroxyhexanoate, 2-hydroxyoctanote, and the short-chain hydroxyacid (S)-lactate (L-lactate). With much lower activity, it can also use glycolate, leucic acid, valic acid, and isoleucic acid as substrates in vitro. Cannot use 2-hydroxyhexadecanoate or D-lactate as substrates. May be involved in a general medium- and long-chain fatty acid catabolic pathway such as alpha-oxidation. In Arabidopsis thaliana (Mouse-ear cress), this protein is Peroxisomal (S)-2-hydroxyacid oxidase GLO4 (GLO4).